A 307-amino-acid polypeptide reads, in one-letter code: MLQQRTIKTLTRAVGVGLHSGQRVELTLRPAAPDTGIVFRRVDLPEPVDIPIRAESVVDTRMASTIGVGGAKVHTVEHLMSACAGLGLDNLYIDITAEEVPILDGSSASFVFLLQSAGVVLQNAPKKFIRVTRPVEVREGEGQQLKWARLEPYHGYKLRFEIDFAHPAVDSTGQSVEFDLGSGNYTRDIARARTFGFTKDVEMMRASGLALGGGLDNAIVMDDYKVLNADGLRYDDEFVKHKILDAIGDLYIVGRPLLAAYSAFRSGHAMNNRLLRELLAHEDAWEIATFESERQAPSGFAAPVQAW.

His-78, His-241, and Asp-245 together coordinate Zn(2+). His-268 acts as the Proton donor in catalysis.

Belongs to the LpxC family. Zn(2+) serves as cofactor.

The catalysed reaction is a UDP-3-O-[(3R)-3-hydroxyacyl]-N-acetyl-alpha-D-glucosamine + H2O = a UDP-3-O-[(3R)-3-hydroxyacyl]-alpha-D-glucosamine + acetate. It participates in glycolipid biosynthesis; lipid IV(A) biosynthesis; lipid IV(A) from (3R)-3-hydroxytetradecanoyl-[acyl-carrier-protein] and UDP-N-acetyl-alpha-D-glucosamine: step 2/6. In terms of biological role, catalyzes the hydrolysis of UDP-3-O-myristoyl-N-acetylglucosamine to form UDP-3-O-myristoylglucosamine and acetate, the committed step in lipid A biosynthesis. The polypeptide is UDP-3-O-acyl-N-acetylglucosamine deacetylase (Paracidovorax citrulli (strain AAC00-1) (Acidovorax citrulli)).